The sequence spans 1196 residues: Major DNA-binding protein (1196 aa).

A zinc finger lies at 499–512; sequence CNLCTFDTRHACVH. Short sequence motifs (required for filament formation) lie at residues 843-844 and 1142-1144; these read FW and FNF. Residues 1158 to 1196 are disordered; sequence GGPGAPGPAFAGRKRAFHGDDPFGEGPPDKKGDLTLDML. The tract at residues 1170 to 1196 is required for nuclear localization; it reads RKRAFHGDDPFGEGPPDKKGDLTLDML. The segment covering 1174 to 1196 has biased composition (basic and acidic residues); sequence FHGDDPFGEGPPDKKGDLTLDML.

It belongs to the herpesviridae major DNA-binding protein family. As to quaternary structure, homooligomers. Forms double-helical filaments necessary for the formation of replication compartments within the host nucleus. Interacts with the origin-binding protein. Interacts with the helicase primase complex; this interaction stimulates primer synthesis activity of the helicase-primase complex. Interacts with the DNA polymerase. Interacts with the alkaline exonuclease; this interaction increases its nuclease processivity.

The protein localises to the host nucleus. Functionally, plays several crucial roles in viral infection. Participates in the opening of the viral DNA origin to initiate replication by interacting with the origin-binding protein. May disrupt loops, hairpins and other secondary structures present on ssDNA to reduce and eliminate pausing of viral DNA polymerase at specific sites during elongation. Promotes viral DNA recombination by performing strand-transfer, characterized by the ability to transfer a DNA strand from a linear duplex to a complementary single-stranded DNA circle. Can also catalyze the renaturation of complementary single strands. Additionally, reorganizes the host cell nucleus, leading to the formation of prereplicative sites and replication compartments. This process is driven by the protein which can form double-helical filaments in the absence of DNA. This is Major DNA-binding protein from Human herpesvirus 1 (strain KOS) (HHV-1).